Reading from the N-terminus, the 73-residue chain is Small ribosomal subunit protein eS27 (73 aa).

Zn(2+)-binding residues include C28, C31, C47, and C50. The segment at 28 to 50 (CPKCGNRQVVFSHSTFRARCLNC) adopts a C4-type zinc-finger fold.

Belongs to the eukaryotic ribosomal protein eS27 family. In terms of assembly, part of the 30S ribosomal subunit. Zn(2+) serves as cofactor.

The protein is Small ribosomal subunit protein eS27 of Aeropyrum pernix (strain ATCC 700893 / DSM 11879 / JCM 9820 / NBRC 100138 / K1).